Reading from the N-terminus, the 396-residue chain is Maltose/maltodextrin-binding periplasmic protein (396 aa).

Positions 1–26 (MKIKTGARILALSALTTMMFSASALA) are cleaved as a signal peptide.

Belongs to the bacterial solute-binding protein 1 family. In terms of assembly, the complex is composed of two ATP-binding proteins (MalK), two transmembrane proteins (MalG and MalF) and a solute-binding protein (MalE).

Its subcellular location is the periplasm. Its function is as follows. Part of the ABC transporter complex MalEFGK involved in maltose/maltodextrin import. Binds maltose and higher maltodextrins. The polypeptide is Maltose/maltodextrin-binding periplasmic protein (malE) (Klebsiella aerogenes (Enterobacter aerogenes)).